Here is a 583-residue protein sequence, read N- to C-terminus: MGEKLDKDSILYKKRHSIAHVMAEAVLELFPNTKIAIGPPIKDGFYYDFDFEKHISEDDLLLIEHKMREILKTGSPFIREVITREQALVLFKDEPYKIDLIQNFDVTDEITIYKSHKFTDLCRGPHVDNMNKLDPKAFKLTSIAGAYWRGDERNKMLSRIYGTLWNNEKDLKAYLKLQEEIKKRDHRKLGRELNLFSVHDEIGPGLIFFHPHGARIRALIENFWREEHFKNGYDILFTPHIGKSWLWETSGHLDFYKESMFEKIEMDRSDYYVKPMNCPFHIAIYNTDKHSYRDLPFRWAELGTVYRYEKIGAIHGTMRVRGFTQDDAHIICTYEQVNFEVREVLRFAIDMWNKFGFTNLKAYLSTKPEKAVGDDDDWQMAVKVLEKALIDFNIDFDIDEGGGAFYGPKIDLKIIDSLGRAWQMSTIQFDFNLPVRFKMTYTAEDGKEKRPFMIHRALLGSIERFFGILVEHYGGAFPVWLAPLQVVIIPVNSIVEEYALEVLSRFQNEGIRIKFDNYCNMRMNAKIRQYQSKKVPYMFIIGEREVVEGKISIRTRTNEQINGLELKEALEFVKLKISNKEIL.

The tract at residues 185–478 is catalytic; that stretch reads DHRKLGRELN…LVEHYGGAFP (294 aa). 3 residues coordinate Zn(2+): cysteine 278, histidine 329, and histidine 455.

The protein belongs to the class-II aminoacyl-tRNA synthetase family. As to quaternary structure, homodimer. It depends on Zn(2+) as a cofactor.

The protein localises to the cytoplasm. It carries out the reaction tRNA(Thr) + L-threonine + ATP = L-threonyl-tRNA(Thr) + AMP + diphosphate + H(+). Its function is as follows. Catalyzes the attachment of threonine to tRNA(Thr) in a two-step reaction: L-threonine is first activated by ATP to form Thr-AMP and then transferred to the acceptor end of tRNA(Thr). Also edits incorrectly charged L-seryl-tRNA(Thr). This Borrelia duttonii (strain Ly) protein is Threonine--tRNA ligase.